The following is a 220-amino-acid chain: U1 small nuclear ribonucleoprotein C (220 aa).

The segment at 4 to 36 (YYCDYCDIYLTHDSMNARKAHNSGRNHVANVRD) adopts a Matrin-type zinc-finger fold. Composition is skewed to pro residues over residues 88–130 (PGPP…PFLP) and 147–165 (PPFPPNTASPNPGMPPFRP). The interval 88–220 (PGPPPPGAFP…HPDRLRMLGQ (133 aa)) is disordered. The span at 166–200 (PMGMGMPPAPAQAQAQGSPMGMPQQGQQGTFTPTQ) shows a compositional bias: low complexity. A compositionally biased stretch (basic and acidic residues) spans 211-220 (HPDRLRMLGQ).

It belongs to the U1 small nuclear ribonucleoprotein C family. As to quaternary structure, U1 snRNP is composed of the 7 core Sm proteins B/B', D1, D2, D3, E, F and G that assemble in a heptameric protein ring on the Sm site of the small nuclear RNA to form the core snRNP, and at least 3 U1 snRNP-specific proteins U1-70K, U1-A and U1-C. U1-C interacts with U1 snRNA and the 5' splice-site region of the pre-mRNA.

The protein resides in the nucleus. Its function is as follows. Component of the spliceosomal U1 snRNP, which is essential for recognition of the pre-mRNA 5' splice-site and the subsequent assembly of the spliceosome. U1-C is directly involved in initial 5' splice-site recognition for both constitutive and regulated alternative splicing. The interaction with the 5' splice-site seems to precede base-pairing between the pre-mRNA and the U1 snRNA. Stimulates commitment or early (E) complex formation by stabilizing the base pairing of the 5' end of the U1 snRNA and the 5' splice-site region. In Cryptococcus neoformans var. neoformans serotype D (strain JEC21 / ATCC MYA-565) (Filobasidiella neoformans), this protein is U1 small nuclear ribonucleoprotein C.